The chain runs to 330 residues: Putative 1-aminocyclopropane-1-carboxylate deaminase (330 aa).

An N6-(pyridoxal phosphate)lysine modification is found at Lys54.

Belongs to the ACC deaminase/D-cysteine desulfhydrase family. The cofactor is pyridoxal 5'-phosphate.

It catalyses the reaction 1-aminocyclopropane-1-carboxylate + H2O = 2-oxobutanoate + NH4(+). The sequence is that of Putative 1-aminocyclopropane-1-carboxylate deaminase from Pyrococcus abyssi (strain GE5 / Orsay).